Consider the following 341-residue polypeptide: Phenylalanine--tRNA ligase alpha subunit (341 aa).

Glu-256 lines the Mg(2+) pocket.

The protein belongs to the class-II aminoacyl-tRNA synthetase family. Phe-tRNA synthetase alpha subunit type 1 subfamily. As to quaternary structure, tetramer of two alpha and two beta subunits. Requires Mg(2+) as cofactor.

Its subcellular location is the cytoplasm. It carries out the reaction tRNA(Phe) + L-phenylalanine + ATP = L-phenylalanyl-tRNA(Phe) + AMP + diphosphate + H(+). This is Phenylalanine--tRNA ligase alpha subunit from Leptospira interrogans serogroup Icterohaemorrhagiae serovar Lai (strain 56601).